The chain runs to 749 residues: Patatin-like phospholipase domain-containing protein AN0408 (749 aa).

The span at 1 to 11 (MEKSAAGDNID) shows a compositional bias: basic and acidic residues. Positions 1–21 (MEKSAAGDNIDKYSPSSIPDY) are disordered. Residues 92–112 (WPFLLFVLGWITFLSVGYALT) form a helical membrane-spanning segment. The region spanning 280-471 (LCLSGGATFA…RTDIPIKALN (192 aa)) is the PNPLA domain. Positions 311–315 (GTSGG) match the GXSXG motif. Residue Ser-313 is the Nucleophile of the active site. Residue Asp-458 is the Proton acceptor of the active site. Positions 630–659 (SIQPFPFDNGAAGADQKSNDPREERLNRNF) are disordered. Over residues 646–659 (KSNDPREERLNRNF) the composition is skewed to basic and acidic residues.

It belongs to the PLPL family.

It localises to the membrane. Its function is as follows. Probable lipid hydrolase. In Emericella nidulans (strain FGSC A4 / ATCC 38163 / CBS 112.46 / NRRL 194 / M139) (Aspergillus nidulans), this protein is Patatin-like phospholipase domain-containing protein AN0408.